A 359-amino-acid polypeptide reads, in one-letter code: Guanine nucleotide-binding protein alpha-4 subunit (359 aa).

Glycine 2 is lipidated: N-myristoyl glycine. A lipid anchor (S-palmitoyl cysteine) is attached at cysteine 3. One can recognise a G-alpha domain in the interval 31 to 359 (TEVKLLLLGA…RYNLKDCGLF (329 aa)). The G1 motif stretch occupies residues 34–47 (KLLLLGAGESGKST). GTP contacts are provided by residues 39–46 (GAGESGKS), 178–184 (LRARVKS), 203–207 (DVGGQ), 272–275 (NKMD), and alanine 331. Serine 46 is a Mg(2+) binding site. The tract at residues 176–184 (DILRARVKS) is G2 motif. The interval 199-208 (FRMFDVGGQR) is G3 motif. The G4 motif stretch occupies residues 268 to 275 (ILFLNKMD). Positions 329 to 334 (TCATDT) are G5 motif.

Belongs to the G-alpha family. G(i/o/t/z) subfamily. G proteins are composed of 3 units; alpha, beta and gamma. The alpha chain contains the guanine nucleotide binding site.

Guanine nucleotide-binding proteins (G proteins) are involved as modulators or transducers in various transmembrane signaling systems. The sequence is that of Guanine nucleotide-binding protein alpha-4 subunit (gpa-4) from Caenorhabditis briggsae.